The chain runs to 434 residues: Na(+)/H(+) antiporter NhaA 1 (434 aa).

10 helical membrane-spanning segments follow: residues 30–50 (TGGLLLLVFTVIALVWANVAG), 70–90 (LSIEHWAADGLLAIFFFVTGL), 108–128 (ALPIAAAVGGMAVPALLFVLV), 141–161 (VGWATPTATDIAFALGILAVV), 172–192 (FLLTLAVVDDLLGITVIAIFY), 195–215 (QVHWTPLLLALLTLAAFTVAV), 286–306 (FAVPVFALFSAGVAIGGVSGF), 318–338 (VIAGLVLGKPIGIVGTTWLLA), 354–374 (VLGMAMLAGMGFTVSLLIGSL), and 386–406 (VTLGVLVGSLLSAVLAAVVLS).

Belongs to the NhaA Na(+)/H(+) (TC 2.A.33) antiporter family.

It is found in the cell membrane. The catalysed reaction is Na(+)(in) + 2 H(+)(out) = Na(+)(out) + 2 H(+)(in). In terms of biological role, na(+)/H(+) antiporter that extrudes sodium in exchange for external protons. This Kineococcus radiotolerans (strain ATCC BAA-149 / DSM 14245 / SRS30216) protein is Na(+)/H(+) antiporter NhaA 1.